The sequence spans 340 residues: L-threonine 3-dehydrogenase (340 aa).

Cys38 serves as a coordination point for Zn(2+). Active-site charge relay system residues include Thr40 and His43. His63, Glu64, Cys93, Cys96, Cys99, and Cys107 together coordinate Zn(2+). NAD(+)-binding positions include Ile175, Asp195, Arg200, 261–263 (LGI), and 285–286 (IY).

This sequence belongs to the zinc-containing alcohol dehydrogenase family. Homotetramer. Zn(2+) is required as a cofactor.

It is found in the cytoplasm. The enzyme catalyses L-threonine + NAD(+) = (2S)-2-amino-3-oxobutanoate + NADH + H(+). The protein operates within amino-acid degradation; L-threonine degradation via oxydo-reductase pathway; glycine from L-threonine: step 1/2. Its function is as follows. Catalyzes the NAD(+)-dependent oxidation of L-threonine to 2-amino-3-ketobutyrate. This is L-threonine 3-dehydrogenase from Stenotrophomonas maltophilia (strain K279a).